The primary structure comprises 310 residues: MPVSTTLLQSDLPGLPLRHRGKVRDVFDIPRDRLPADAPPGDYLLMVATDRLSAFDVVLPDPIPGKGEMLCQVSNFWFHKTEHLMPNHLVDIRVEQVLPEGVDPALYAKRAVVTRKLKPVPVEAIARGYVIGSGWKDYQRTGKISGIELPDGLRQAEKLPEPIFTPSTKAAVGDHDENIDFDAMVKTVGAELAERVRDATLRIYRFAADFAAERGILLADTKFEFGTDADGRLYIMDEMLTPDSSRYWPADQYEPGTSPPSYDKQFVRDYLETLDWGKTAPGPRLPADVIDRTRAKYAEALQRLAGISVD.

The protein belongs to the SAICAR synthetase family.

It catalyses the reaction 5-amino-1-(5-phospho-D-ribosyl)imidazole-4-carboxylate + L-aspartate + ATP = (2S)-2-[5-amino-1-(5-phospho-beta-D-ribosyl)imidazole-4-carboxamido]succinate + ADP + phosphate + 2 H(+). It functions in the pathway purine metabolism; IMP biosynthesis via de novo pathway; 5-amino-1-(5-phospho-D-ribosyl)imidazole-4-carboxamide from 5-amino-1-(5-phospho-D-ribosyl)imidazole-4-carboxylate: step 1/2. This Xanthomonas axonopodis pv. citri (strain 306) protein is Phosphoribosylaminoimidazole-succinocarboxamide synthase.